Consider the following 390-residue polypeptide: GTPase Obg (390 aa).

One can recognise an Obg domain in the interval 1 to 159 (MKFIDESLIR…RDLLLELMLL (159 aa)). In terms of domain architecture, OBG-type G spans 160–333 (ADVGMLGLPN…LCRDIMDFII (174 aa)). Residues 166–173 (GLPNAGKS), 191–195 (FTTLV), 213–216 (DIPG), 283–286 (NKID), and 314–316 (SAA) each bind GTP. Mg(2+)-binding residues include Ser173 and Thr193. Positions 363–382 (EHQFDDDEDWDDDWSEEDDE) are disordered. The span at 366–382 (FDDDEDWDDDWSEEDDE) shows a compositional bias: acidic residues.

This sequence belongs to the TRAFAC class OBG-HflX-like GTPase superfamily. OBG GTPase family. Monomer. Requires Mg(2+) as cofactor.

Its subcellular location is the cytoplasm. In terms of biological role, an essential GTPase which binds GTP, GDP and possibly (p)ppGpp with moderate affinity, with high nucleotide exchange rates and a fairly low GTP hydrolysis rate. Plays a role in control of the cell cycle, stress response, ribosome biogenesis and in those bacteria that undergo differentiation, in morphogenesis control. The sequence is that of GTPase Obg from Haemophilus influenzae (strain ATCC 51907 / DSM 11121 / KW20 / Rd).